The following is a 400-amino-acid chain: Capsid protein (400 aa).

Residues 1–10 (MDPNLDQDTL) are compositionally biased toward polar residues. A disordered region spans residues 1-54 (MDPNLDQDTLPTHEEIDNDVDSAEEEPPEPPLLPDDIDDDDSHGSRTRRQVKPP). Positions 16-28 (IDNDVDSAEEEPP) are enriched in acidic residues.

It belongs to the potexvirus capsid protein family.

It localises to the virion. In terms of biological role, required for genome encapsidation. The sequence is that of Capsid protein (ORF3) from Botryotinia fuckeliana (Noble rot fungus).